Reading from the N-terminus, the 93-residue chain is MDGIRYAVFTDKSIRLLGKNQYTSNVESGSTRTEIKHWVELFFGVKVIAMNSHRLRGKARRMGPIMGQTMHYRRMIITLQPGYSIPPLRKKRT.

It belongs to the universal ribosomal protein uL23 family. As to quaternary structure, part of the 50S ribosomal subunit.

It is found in the plastid. Its subcellular location is the chloroplast. Functionally, binds to 23S rRNA. The protein is Large ribosomal subunit protein uL23cz/uL23cy (rpl23-A) of Helianthus annuus (Common sunflower).